An 87-amino-acid chain; its full sequence is Phosphoribosyl-ATP pyrophosphatase (87 aa).

The protein belongs to the PRA-PH family.

It is found in the cytoplasm. It carries out the reaction 1-(5-phospho-beta-D-ribosyl)-ATP + H2O = 1-(5-phospho-beta-D-ribosyl)-5'-AMP + diphosphate + H(+). It participates in amino-acid biosynthesis; L-histidine biosynthesis; L-histidine from 5-phospho-alpha-D-ribose 1-diphosphate: step 2/9. This chain is Phosphoribosyl-ATP pyrophosphatase, found in Nocardioides sp. (strain ATCC BAA-499 / JS614).